The primary structure comprises 113 residues: Nucleoid-associated protein ROP_41370 (113 aa).

The protein belongs to the YbaB/EbfC family. Homodimer.

It localises to the cytoplasm. Its subcellular location is the nucleoid. Binds to DNA and alters its conformation. May be involved in regulation of gene expression, nucleoid organization and DNA protection. In Rhodococcus opacus (strain B4), this protein is Nucleoid-associated protein ROP_41370.